The primary structure comprises 501 residues: TNF receptor-associated factor 2 (501 aa).

The residue at position 2 (Ala2) is an N-acetylalanine. Phosphoserine is present on Ser5. Thr7 carries the post-translational modification Phosphothreonine. Ser11 is subject to Phosphoserine. Thr22 carries the phosphothreonine modification. Lys31 is covalently cross-linked (Glycyl lysine isopeptide (Lys-Gly) (interchain with G-Cter in ubiquitin)). The RING-type zinc finger occupies 34-73 (CSACKNILRRPFQAQCGHRYCSFCLTSILSSGPQNCAACV). A Phosphothreonine; by PKC modification is found at Thr117. 2 TRAF-type zinc fingers span residues 124 to 180 (CHEG…VHYE) and 177 to 233 (VHYE…ENLQ). Positions 283-293 (ENIVCVLNREV) are important for interaction with BIRC2 and BIRC3. Residues 298–348 (VTAEACSRQHRLDQDKIEALSNKVQQLERSIGLKDLAMADLEQKVSELEVS) are a coiled coil. A Glycyl lysine isopeptide (Lys-Gly) (interchain with G-Cter in ubiquitin) cross-link involves residue Lys320. Residues 351–496 (DGVFIWKISD…DDAIFIKAIV (146 aa)) enclose the MATH domain.

It belongs to the TNF receptor-associated factor family. A subfamily. In terms of assembly, homotrimer. Heterotrimer with TRAF1. Heterotrimer with TRAF3 (via TRAF domain). The domain containing the RING-type and the first TRAF-type zinc finger can also form homodimers (in vitro). Interacts with TNFRSF1B/TNFR2. Interacts with TNFRSF5/CD40. Interacts with TNFRSF4, TNFRSF7/CD27, TNFRSF8/CD30, TNFRSF9/CD137, TNFRSF11A/RANK, TNFRSF13B/TACI, TNFRSF14, TNFRSF16/NGFR, TNFRSF17/BCMA, TNFRSF18/AITR, TNFRSF19/TROY, TNFRSF19L/RELT and EDAR. Stimulation of TNF-alpha receptor TNFRSF1A leads to the formation of two distinct signaling complexes. Plasma membrane-bound complex I is composed of TNFRSF1A, TRADD, RIPK1, TRAF2 and BIRC2/c-IAP1 or BIRC3 which interacts with CHUCK/IKK-alpha, IKBKB/IKK-beta and IKBKG/IKK-gamma promoting cell survival. Subsequently, TRADD, RIPK1 and TRAF2 dissociate from TNFRSF1A and form cytoplasmic complex II with FADD and caspase CASP8 promoting cell apoptosis. Interacts with TRADD. Identified in a complex with TNFRSF1A, RIPK1 and IKBKB/IKK-beta. Interacts with RIPK2. Interacts with BIRC2 and BIRC3 N-terminus; a single BIRC2 or BIRC3 molecule interacts with a heterotrimer formed by TRAF1 and TRAF2, or a TRAF2 homotrimer. Identified in a complex composed of TRAF2, TRAF3, BIRC2 and BIRC3. Interacts with BIRC2; the interaction promotes BIRC2 stability. Interaction with BIRC2 and/or BIRC3 is essential for ubiquitination of IKBKE, degradation of NFKBIA and activation of NF-kappa-B. Within complex I, phosphorylated TRAF2 interacts (via 'Lys-63'-linked polyubiquitin chains) with CHUCK/IKK-alpha, IKBKB/IKK-beta, IKBKG/IKK-gamma TAB2, TAB3 and TAK1 in response to TNF-alpha stimulation. Within complex I, interacts with UXT isoform 1 (via TPQE motif); the interaction prevents the recruitment of FADD and CASP8/caspase 8 to complex I. Forms a complex composed of TNFRSF8/CD30 or TNFRSF1B/TNFR2, and TRAF1, TRAF2 and E3 ligase TRAIP. Within the complex, interacts with TRAIP; the interaction inhibits TRAF2-mediated NF-kappa B activation. Component of a complex composed of TANK and TBK1. Interacts with TRPC4AP. Interacts with MAP3K1/MEKK1, MAP3K5/ASK1 and MAP3K11/MLK3 in response to TNF-alpha stimulation; the interaction leads to JNK activation and interaction with MAP3K5 is inhibited by PRMT1. Component of a complex composed of MAP3K14/NIK BIRC3 and TRAF3; the interaction leads to BIRC2/3-mediated ubiquitination of TRAF3 upon CD40 engagement in a TRAF2-dependent manner. Interacts with MAP3K14/NIK in response to TNF-alpha stimulation; the interaction leads to NF-kappa B activation. Interacts with PEG3; the interaction may promote TRAF2-mediated NF-kappa B activation. Interacts with HIVEP3; the interaction may inhibit TNF-alpha-TRAF2-mediated NF-kappa B and JNK activation. Interacts with TANK/ITRAF; the interaction prevents interaction between TNFRSF1B/TNFR2 and TRAF2. Interacts with deubiquitinating enzyme CYLD; the interaction results in the deubiquitination and inactivation of TRAF2. Interacts with SIAH2; the interaction leads to TRAF2 ubiquitination and degradation. Interacts with E2 conjugating enzyme UBE2N/Ubc13, E3 ligase ITCH and RNF11 in response to TNF-alpha stimulation. Interacts with ubiquitin-editing enzyme TNFAIP3/A20 in response to TNF-alpha stimulation; the interaction promotes TRAF2 dissociation from UBE2N/Ubc13, ITCH, RNF11 and TAX1BP1 and prevents prolonged TRAF-2 ubiquitination. Interacts with TAX1BP1 in response to TNF-alpha stimulation; the interaction promotes TRAF2 dissociation from UBE2N/Ubc13 and TNFAIP3/A20, and prevents prolonged TRAF-2 ubiquitination. Interacts (via C-terminus) with EIF2AK2/PKR (via the kinase catalytic domain). Interacts with deubiquitinating enzyme USP48. Interacts with PTPN2; probably involved in TNF-mediated signaling. Interacts with Toll-like receptor TLR4/3 adapter TICAM1/TRIF; the interaction may promote TICAM1 ubiquitination. Interacts with kinase/endoribonuclease ERN1/IRE1 and DAB2IP in response to ER stress; the interaction requires DAB2IP. Interacts with ERN1/IRE1 and TAOK3 in response to ER stress; the interaction may promote TRAF2 phosphorylation. Interacts (via zinc fingers) with DAB2IP (via C-terminus PER domain) in response to TNF-alpha stimulation. Interacts with CASP8AP2/FLASH. Interacts with NFATC2IP; the interaction may repress IL-4 production in T cells. Interacts with kinase CDK9. Interacts with sphingosine kinase 1 SPHK1. Interacts with kinase TNIK. Interacts with TRAFD1. Interacts with DNA phosphodiesterase TDP2. Interacts with MAVS/IPS1. Interacts with CARD14. Interacts with GPS2. Interacts with XPNPEP3. Interacts with RIPK3. Interacts with RELL2. Interacts with LRRC19. Interacts with GAPDH; promoting TRAF2 ubiquitination. In terms of processing, phosphorylated at several serine residues within the first 128 amino acid residues. Phosphorylated at Thr-117 in response to signaling via TNF and TNFRSF1A. Phosphorylation at Thr-117 is required for 'Lys-63'-linked polyubiquitination, but not for 'Lys-48'-linked polyubiquitination. Phosphorylation at Thr-117 is important for interaction with IKKA and IKKB, activation of IKK and subsequent activation of NF-kappa-B. Post-translationally, undergoes both 'Lys-48'-linked and 'Lys-63'-linked polyubiquitination. Polyubiquitinated via 'Lys-63'-linked ubiquitin in response to TNF signaling; this requires prior phosphorylation at Thr-117. 'Lys-63'-linked polyubiquitination promotes TRAF2-mediated activation of NF-kappa-B. Can be polyubiquitinated at several Lys residues via 'Lys-48'-linked ubiquitin chains in response to TNF signaling, leading to proteasomal degradation. Autoubiquitinated, leading to its subsequent proteasomal degradation. Polyubiquitinated by BIRC2 and SIAH2, leading to its subsequent proteasomal degradation. Not ubiquitinated by BIRC3 or SIAH1. Deubiquitinated by CYLD, a protease that specifically cleaves 'Lys-63'-linked polyubiquitin chains. Ubiquination is inhibited by LRRC19; inhiits proteasomal degradation. Ubiquitinated at Lys-320 by the SCF(FBXL2) complex, leading to its degradation by the proteasome. Ubiquitinated by E3 ubiquitin-protein ligase complex containing FBXO7; leading to repression of NF-kappa-B signaling. In terms of tissue distribution, isoform 1 and isoform 2 are expressed in spleen, adipose tissues, skeletal muscles, thymus, testis, heart, lung, brain. Isoform 2 is very weakly expressed in heart, lung and brain.

Its subcellular location is the cytoplasm. The catalysed reaction is S-ubiquitinyl-[E2 ubiquitin-conjugating enzyme]-L-cysteine + [acceptor protein]-L-lysine = [E2 ubiquitin-conjugating enzyme]-L-cysteine + N(6)-ubiquitinyl-[acceptor protein]-L-lysine.. The protein operates within protein modification; protein ubiquitination. With respect to regulation, has very low E3 ubiquitin ligase activity in the absence of sphingosine-1-phosphate. E3 ubiquitin ligase activity is strongly activated by cytoplasmic sphingosine-1-phosphate. E3 ubiquitin-protein ligase that regulates activation of NF-kappa-B and JNK and plays a central role in the regulation of cell survival and apoptosis. Catalyzes 'Lys-63'-linked ubiquitination of target proteins, such as BIRC3, IKBKE, MLST8, RIPK1 and TICAM1. Is an essential constituent of several E3 ubiquitin-protein ligase complexes, where it promotes the ubiquitination of target proteins by bringing them into contact with other E3 ubiquitin ligases. Regulates BIRC2 and BIRC3 protein levels by inhibiting their autoubiquitination and subsequent degradation; this does not depend on the TRAF2 RING-type zinc finger domain. Plays a role in mediating activation of NF-kappa-B by EIF2AK2/PKR. In complex with BIRC2 or BIRC3, promotes ubiquitination of IKBKE. Acts as a regulator of mTORC1 and mTORC2 assembly by mediating 'Lys-63'-linked ubiquitination of MLST8, thereby inhibiting formation of the mTORC2 complex, while facilitating assembly of the mTORC1 complex. Required for normal antibody isotype switching from IgM to IgG. The polypeptide is TNF receptor-associated factor 2 (Traf2) (Mus musculus (Mouse)).